The primary structure comprises 429 residues: Glutamate-1-semialdehyde 2,1-aminomutase 2 (429 aa).

Residue lysine 268 is modified to N6-(pyridoxal phosphate)lysine.

Belongs to the class-III pyridoxal-phosphate-dependent aminotransferase family. HemL subfamily. As to quaternary structure, homodimer. Pyridoxal 5'-phosphate is required as a cofactor.

Its subcellular location is the cytoplasm. It catalyses the reaction (S)-4-amino-5-oxopentanoate = 5-aminolevulinate. It functions in the pathway porphyrin-containing compound metabolism; protoporphyrin-IX biosynthesis; 5-aminolevulinate from L-glutamyl-tRNA(Glu): step 2/2. The polypeptide is Glutamate-1-semialdehyde 2,1-aminomutase 2 (Bacillus thuringiensis (strain Al Hakam)).